Reading from the N-terminus, the 332-residue chain is Phosphate acyltransferase (332 aa).

It belongs to the PlsX family. Homodimer. Probably interacts with PlsY.

Its subcellular location is the cytoplasm. It carries out the reaction a fatty acyl-[ACP] + phosphate = an acyl phosphate + holo-[ACP]. The protein operates within lipid metabolism; phospholipid metabolism. Functionally, catalyzes the reversible formation of acyl-phosphate (acyl-PO(4)) from acyl-[acyl-carrier-protein] (acyl-ACP). This enzyme utilizes acyl-ACP as fatty acyl donor, but not acyl-CoA. The sequence is that of Phosphate acyltransferase from Bacillus pumilus (strain SAFR-032).